A 342-amino-acid chain; its full sequence is tRNA dimethylallyltransferase (342 aa).

The interval 1-30 is disordered; that stretch reads MSANGPAAEPADGGRAVPAGGGEAVPAGGG. A compositionally biased stretch (gly residues) spans 19-30; that stretch reads AGGGEAVPAGGG. 49-56 lines the ATP pocket; sequence GPTAAGKS. 51–56 is a substrate binding site; sequence TAAGKS. Residues 74–77 are interaction with substrate tRNA; it reads DSMQ.

The protein belongs to the IPP transferase family. Monomer. Mg(2+) serves as cofactor.

It catalyses the reaction adenosine(37) in tRNA + dimethylallyl diphosphate = N(6)-dimethylallyladenosine(37) in tRNA + diphosphate. Functionally, catalyzes the transfer of a dimethylallyl group onto the adenine at position 37 in tRNAs that read codons beginning with uridine, leading to the formation of N6-(dimethylallyl)adenosine (i(6)A). In Salinispora arenicola (strain CNS-205), this protein is tRNA dimethylallyltransferase.